Consider the following 221-residue polypeptide: uncharacterized protein (221 aa).

The first 26 residues, 1–26 (MVRLVPRAFAATVALLAAGFSPATAS), serve as a signal peptide directing secretion.

This is an uncharacterized protein from Mycobacterium tuberculosis (strain CDC 1551 / Oshkosh).